A 439-amino-acid chain; its full sequence is Glucan 1,3-beta-glucosidase (439 aa).

An N-terminal signal peptide occupies residues 1-18 (MLLSLLFLLSTFAFGALT). E227 acts as the Proton donor in catalysis. Intrachain disulfides connect C311-C437 and C336-C366. E328 (nucleophile) is an active-site residue.

Belongs to the glycosyl hydrolase 5 (cellulase A) family.

It localises to the secreted. The enzyme catalyses Successive hydrolysis of beta-D-glucose units from the non-reducing ends of (1-&gt;3)-beta-D-glucans, releasing alpha-glucose.. Beta-glucanases participate in the metabolism of beta-glucan, the main structural component of the cell wall. It could also function biosynthetically as a transglycosylase. This chain is Glucan 1,3-beta-glucosidase (EXG1), found in Lachancea kluyveri (strain ATCC 58438 / CBS 3082 / BCRC 21498 / NBRC 1685 / JCM 7257 / NCYC 543 / NRRL Y-12651) (Yeast).